A 120-amino-acid chain; its full sequence is U13-barytoxin-Tl1a (120 aa).

The signal sequence occupies residues 1–20; sequence MKTIIVFLSLLVLATKFGDA. Disulfide bonds link C75-C90, C82-C95, and C89-C109.

The protein belongs to the neurotoxin 14 (magi-1) family. 05 (ICK-7) subfamily. ICK-7 sub-subfamily. In terms of tissue distribution, expressed by the venom gland.

The protein resides in the secreted. Functionally, ion channel inhibitor. The sequence is that of U13-barytoxin-Tl1a from Trittame loki (Brush-footed trapdoor spider).